The following is a 275-amino-acid chain: 3-methyl-2-oxobutanoate hydroxymethyltransferase (275 aa).

Residues aspartate 44 and aspartate 83 each coordinate Mg(2+). Residues 44–45 (DS), aspartate 83, and lysine 113 contribute to the 3-methyl-2-oxobutanoate site. Glutamate 115 lines the Mg(2+) pocket. Residue glutamate 182 is the Proton acceptor of the active site.

This sequence belongs to the PanB family. As to quaternary structure, homodecamer; pentamer of dimers. Requires Mg(2+) as cofactor.

The protein resides in the cytoplasm. It carries out the reaction 3-methyl-2-oxobutanoate + (6R)-5,10-methylene-5,6,7,8-tetrahydrofolate + H2O = 2-dehydropantoate + (6S)-5,6,7,8-tetrahydrofolate. Its pathway is cofactor biosynthesis; (R)-pantothenate biosynthesis; (R)-pantoate from 3-methyl-2-oxobutanoate: step 1/2. Functionally, catalyzes the reversible reaction in which hydroxymethyl group from 5,10-methylenetetrahydrofolate is transferred onto alpha-ketoisovalerate to form ketopantoate. This is 3-methyl-2-oxobutanoate hydroxymethyltransferase from Clostridium botulinum (strain Loch Maree / Type A3).